The primary structure comprises 347 residues: Phenylalanine--tRNA ligase alpha subunit (347 aa).

A Mg(2+)-binding site is contributed by Glu-265.

This sequence belongs to the class-II aminoacyl-tRNA synthetase family. Phe-tRNA synthetase alpha subunit type 1 subfamily. As to quaternary structure, tetramer of two alpha and two beta subunits. Requires Mg(2+) as cofactor.

The protein localises to the cytoplasm. The catalysed reaction is tRNA(Phe) + L-phenylalanine + ATP = L-phenylalanyl-tRNA(Phe) + AMP + diphosphate + H(+). This chain is Phenylalanine--tRNA ligase alpha subunit, found in Mycolicibacterium gilvum (strain PYR-GCK) (Mycobacterium gilvum (strain PYR-GCK)).